A 181-amino-acid polypeptide reads, in one-letter code: ATP-dependent protease subunit HslV (181 aa).

T6 is a catalytic residue. Residues A162, C165, and T168 each contribute to the Na(+) site.

This sequence belongs to the peptidase T1B family. HslV subfamily. In terms of assembly, a double ring-shaped homohexamer of HslV is capped on each side by a ring-shaped HslU homohexamer. The assembly of the HslU/HslV complex is dependent on binding of ATP.

It localises to the cytoplasm. It catalyses the reaction ATP-dependent cleavage of peptide bonds with broad specificity.. With respect to regulation, allosterically activated by HslU binding. In terms of biological role, protease subunit of a proteasome-like degradation complex believed to be a general protein degrading machinery. The polypeptide is ATP-dependent protease subunit HslV (Solidesulfovibrio magneticus (strain ATCC 700980 / DSM 13731 / RS-1) (Desulfovibrio magneticus)).